A 164-amino-acid chain; its full sequence is Glycine cleavage system H protein, mitochondrial (164 aa).

The N-terminal 34 residues, 1-34 (MALRLWASSAANALKISCSGATRAAPAYSISRYF), are a transit peptide targeting the mitochondrion. Residues 56–138 (VATIGITDHA…YEDGWMIKVK (83 aa)) form the Lipoyl-binding domain. K97 is subject to N6-lipoyllysine.

It belongs to the GcvH family. As to quaternary structure, the glycine cleavage system is composed of four proteins: P, T, L and H. (R)-lipoate is required as a cofactor.

Its subcellular location is the mitochondrion. Its function is as follows. The glycine cleavage system catalyzes the degradation of glycine. The H protein shuttles the methylamine group of glycine from the P protein to the T protein. The protein is Glycine cleavage system H protein, mitochondrial (GDCSH) of Oryza sativa subsp. indica (Rice).